Consider the following 163-residue polypeptide: Photosystem II extrinsic protein V (163 aa).

An N-terminal signal peptide occupies residues 1 to 26 (MLRKLILITVATVFFACQLLVNPVSA). Positions 63, 66, 67, and 118 each coordinate heme c.

It belongs to the cytochrome c family. PsbV subfamily. PSII is composed of 1 copy each of membrane proteins PsbA, PsbB, PsbC, PsbD, PsbE, PsbF, PsbH, PsbI, PsbJ, PsbK, PsbL, PsbM, PsbT, PsbX, PsbY, PsbZ, Psb30/Ycf12, peripheral proteins PsbO, CyanoQ (PsbQ), PsbU, PsbV and a large number of cofactors. It forms dimeric complexes. Heme c is required as a cofactor.

The protein localises to the cellular thylakoid membrane. Functionally, one of the extrinsic, lumenal subunits of photosystem II (PSII). PSII is a light-driven water plastoquinone oxidoreductase, using light energy to abstract electrons from H(2)O, generating a proton gradient subsequently used for ATP formation. The extrinsic proteins stabilize the structure of photosystem II oxygen-evolving complex (OEC), the ion environment of oxygen evolution and protect the OEC against heat-induced inactivation. Low-potential cytochrome c that plays a role in the OEC of PSII. This chain is Photosystem II extrinsic protein V, found in Aphanothece halophytica.